Consider the following 213-residue polypeptide: Orotate phosphoribosyltransferase (213 aa).

K26 serves as a coordination point for 5-phospho-alpha-D-ribose 1-diphosphate. 34 to 35 (FF) is a binding site for orotate. Residues 72–73 (YK), R99, K100, K103, H105, and 124–132 (DDVITAGTA) contribute to the 5-phospho-alpha-D-ribose 1-diphosphate site. The orotate site is built by T128 and R156.

The protein belongs to the purine/pyrimidine phosphoribosyltransferase family. PyrE subfamily. In terms of assembly, homodimer. Mg(2+) serves as cofactor.

The catalysed reaction is orotidine 5'-phosphate + diphosphate = orotate + 5-phospho-alpha-D-ribose 1-diphosphate. It functions in the pathway pyrimidine metabolism; UMP biosynthesis via de novo pathway; UMP from orotate: step 1/2. Functionally, catalyzes the transfer of a ribosyl phosphate group from 5-phosphoribose 1-diphosphate to orotate, leading to the formation of orotidine monophosphate (OMP). The protein is Orotate phosphoribosyltransferase of Haemophilus influenzae (strain ATCC 51907 / DSM 11121 / KW20 / Rd).